Reading from the N-terminus, the 598-residue chain is Aspartate--tRNA(Asp/Asn) ligase (598 aa).

An L-aspartate-binding site is contributed by Glu-172. The aspartate stretch occupies residues 196 to 199; the sequence is QLFK. Arg-218 provides a ligand contact to L-aspartate. Residues 218-220 and Gln-227 each bind ATP; that span reads RDE. His-455 is an L-aspartate binding site. Glu-489 contributes to the ATP binding site. Position 496 (Arg-496) interacts with L-aspartate. Residue 541–544 participates in ATP binding; sequence GLDR.

The protein belongs to the class-II aminoacyl-tRNA synthetase family. Type 1 subfamily. Homodimer.

It localises to the cytoplasm. It carries out the reaction tRNA(Asx) + L-aspartate + ATP = L-aspartyl-tRNA(Asx) + AMP + diphosphate. Aspartyl-tRNA synthetase with relaxed tRNA specificity since it is able to aspartylate not only its cognate tRNA(Asp) but also tRNA(Asn). Reaction proceeds in two steps: L-aspartate is first activated by ATP to form Asp-AMP and then transferred to the acceptor end of tRNA(Asp/Asn). The protein is Aspartate--tRNA(Asp/Asn) ligase of Burkholderia mallei (strain ATCC 23344).